The following is a 1118-amino-acid chain: Cytospin-A (1118 aa).

Disordered regions lie at residues 1-157 and 198-221; these read MKKS…DGQI and GGKE…PHVS. Composition is skewed to polar residues over residues 57–102 and 112–123; these read NPTS…TKET and SRASANKKQSAA. Positions 144 to 153 are enriched in basic and acidic residues; the sequence is SESRMSKSKS. Positions 204 to 215 are enriched in acidic residues; that stretch reads EGPEEEEEEEEE. A coiled-coil region spans residues 225 to 264; it reads AADVESTLILLQEQNQAIREELNLLKSENRMLKDRLNALG. A disordered region spans residues 289 to 379; it reads AGSGQSDGGG…RRGSSGNASE (91 aa). Low complexity predominate over residues 343-363; that stretch reads SSDDALDAPSGASSSSESECA. Coiled-coil stretches lie at residues 384-438 and 475-796; these read CLTE…MDSL and GRYM…RGRV. Disordered regions lie at residues 771-790, 837-876, and 920-1001; these read QEKN…RKQD, FDSA…PPAA, and SAAS…ERKD. Positions 838–855 are enriched in polar residues; the sequence is DSASQGPPSNGASVTPTV. The segment covering 861–872 has biased composition (pro residues); the sequence is PRTPLSPSPMKT. Polar residues predominate over residues 930–945; sequence QRVSNMDSTKTISVSR. Residues 946-956 show a composition bias toward basic and acidic residues; that stretch reads RSSEEMKRDMS. Low complexity predominate over residues 961-986; the sequence is ASSTSLMAMSAASAPLSLSSSSPTAS. One can recognise a Calponin-homology (CH) domain in the interval 1012–1117; sequence GSKRNALLKW…YVTAIYKYFE (106 aa).

Belongs to the cytospin-A family. In terms of assembly, may interact with both microtubules and actin cytoskeleton.

It is found in the cytoplasm. It localises to the cytoskeleton. The protein resides in the spindle. Its subcellular location is the cell junction. The protein localises to the gap junction. Involved in cytokinesis and spindle organization. May play a role in actin cytoskeleton organization and microtubule stabilization and hence required for proper cell adhesion and migration. The chain is Cytospin-A (specc1l) from Takifugu rubripes (Japanese pufferfish).